Here is a 659-residue protein sequence, read N- to C-terminus: UvrABC system protein B (659 aa).

One can recognise a Helicase ATP-binding domain in the interval 25–414 (EGVRRGAREQ…PSLVVEQIVR (390 aa)). An ATP-binding site is contributed by 38-45 (GATGTGKT). The Beta-hairpin motif lies at 91 to 114 (YYDYYQPEAYIPTTDTYIEKDALI). The 167-residue stretch at 431–597 (QIDDLYAEIR…TIVKPVRDVI (167 aa)) folds into the Helicase C-terminal domain. Residues 620 to 655 (PKVVAKLRKEMMQAAKDLDFERAAEIRDIIFELEKK) enclose the UVR domain.

It belongs to the UvrB family. Forms a heterotetramer with UvrA during the search for lesions. Interacts with UvrC in an incision complex.

The protein resides in the cytoplasm. Its function is as follows. The UvrABC repair system catalyzes the recognition and processing of DNA lesions. A damage recognition complex composed of 2 UvrA and 2 UvrB subunits scans DNA for abnormalities. Upon binding of the UvrA(2)B(2) complex to a putative damaged site, the DNA wraps around one UvrB monomer. DNA wrap is dependent on ATP binding by UvrB and probably causes local melting of the DNA helix, facilitating insertion of UvrB beta-hairpin between the DNA strands. Then UvrB probes one DNA strand for the presence of a lesion. If a lesion is found the UvrA subunits dissociate and the UvrB-DNA preincision complex is formed. This complex is subsequently bound by UvrC and the second UvrB is released. If no lesion is found, the DNA wraps around the other UvrB subunit that will check the other stand for damage. This chain is UvrABC system protein B, found in Symbiobacterium thermophilum (strain DSM 24528 / JCM 14929 / IAM 14863 / T).